Reading from the N-terminus, the 436-residue chain is 3-ketoacyl-CoA thiolase (436 aa).

The active-site Acyl-thioester intermediate is the cysteine 99. Active-site proton acceptor residues include histidine 392 and cysteine 422.

It belongs to the thiolase-like superfamily. Thiolase family. In terms of assembly, heterotetramer of two alpha chains (FadJ) and two beta chains (FadI).

It localises to the cytoplasm. The catalysed reaction is an acyl-CoA + acetyl-CoA = a 3-oxoacyl-CoA + CoA. Its pathway is lipid metabolism; fatty acid beta-oxidation. Functionally, catalyzes the final step of fatty acid oxidation in which acetyl-CoA is released and the CoA ester of a fatty acid two carbons shorter is formed. This Salmonella paratyphi A (strain AKU_12601) protein is 3-ketoacyl-CoA thiolase.